A 330-amino-acid chain; its full sequence is 2-phospho-L-lactate transferase (330 aa).

Position 49 (Asp49) interacts with 7,8-didemethyl-8-hydroxy-5-deazariboflavin.

Belongs to the CofD family. Homodimer. The cofactor is Mg(2+).

The enzyme catalyses (2S)-lactyl-2-diphospho-5'-guanosine + 7,8-didemethyl-8-hydroxy-5-deazariboflavin = oxidized coenzyme F420-0 + GMP + H(+). The protein operates within cofactor biosynthesis; coenzyme F420 biosynthesis. Functionally, catalyzes the transfer of the 2-phospholactate moiety from (2S)-lactyl-2-diphospho-5'-guanosine to 7,8-didemethyl-8-hydroxy-5-deazariboflavin (FO) with the formation of oxidized coenzyme F420-0 and GMP. The sequence is that of 2-phospho-L-lactate transferase from Haloarcula marismortui (strain ATCC 43049 / DSM 3752 / JCM 8966 / VKM B-1809) (Halobacterium marismortui).